Consider the following 387-residue polypeptide: Eukaryotic translation initiation factor 3 subunit M (387 aa).

The region spanning 181-340 (LSSKVMIELL…RKVHISSTMH (160 aa)) is the PCI domain.

The protein belongs to the eIF-3 subunit M family. In terms of assembly, component of the eukaryotic translation initiation factor 3 (eIF-3) complex. The eIF-3 complex interacts with pix.

Its subcellular location is the cytoplasm. It localises to the golgi apparatus. Component of the eukaryotic translation initiation factor 3 (eIF-3) complex, which is involved in protein synthesis of a specialized repertoire of mRNAs and, together with other initiation factors, stimulates binding of mRNA and methionyl-tRNAi to the 40S ribosome. The eIF-3 complex specifically targets and initiates translation of a subset of mRNAs involved in cell proliferation. The polypeptide is Eukaryotic translation initiation factor 3 subunit M (Drosophila grimshawi (Hawaiian fruit fly)).